The chain runs to 400 residues: NADPH dehydrogenase 3 (400 aa).

FMN is bound by residues T38 and Q115. Positions 192 and 195 each coordinate substrate. Y197 serves as the catalytic Proton donor. FMN-binding residues include R244 and R349. A substrate-binding site is contributed by Y376.

As to quaternary structure, homodimer or heterodimer with OYE2. The cofactor is FMN.

It catalyses the reaction A + NADPH + H(+) = AH2 + NADP(+). In terms of biological role, flavin-dependent enoate reductase that catalyzes the chemo- and stereoslective hydrogenation of electron-poor alkenes. The enzyme is reduced by NADPH, and oxygen, quinones, and alpha,beta-unsaturated aldehydes and ketones can act as electron acceptors to complete catalytic turnover. The physiological oxidant remains elusive. Has a prooxidant activity, increasing reactive oxygen species (ROS) levels when overexpressed. Formation of OYE2-OYE3 heterodimers contribute to the induction of programmed cell death upon oxidative stress. In Saccharomyces cerevisiae (strain ATCC 204508 / S288c) (Baker's yeast), this protein is NADPH dehydrogenase 3.